Consider the following 717-residue polypeptide: Glutamine--fructose-6-phosphate aminotransferase [isomerizing] (717 aa).

The active-site For GATase activity is C2. The region spanning C2–G318 is the Glutamine amidotransferase type-2 domain. At S253 the chain carries Phosphoserine. T334 is modified (phosphothreonine). S336 carries the phosphoserine modification. 2 SIS domains span residues W390 to S529 and C562 to P707.

The enzyme catalyses D-fructose 6-phosphate + L-glutamine = D-glucosamine 6-phosphate + L-glutamate. The protein operates within nucleotide-sugar biosynthesis; UDP-N-acetyl-alpha-D-glucosamine biosynthesis; alpha-D-glucosamine 6-phosphate from D-fructose 6-phosphate: step 1/1. Functionally, involved in amino sugar synthesis (formation of chitin, supplies the amino sugars of asparagine-linked oligosaccharides of glycoproteins). The sequence is that of Glutamine--fructose-6-phosphate aminotransferase [isomerizing] (GFA1) from Saccharomyces cerevisiae (strain ATCC 204508 / S288c) (Baker's yeast).